We begin with the raw amino-acid sequence, 351 residues long: L-threonine 3-dehydrogenase (351 aa).

Cys39 serves as a coordination point for Zn(2+). Active-site charge relay system residues include Thr41 and His44. Zn(2+)-binding residues include His64, Glu65, Cys94, Cys97, Cys100, and Cys108. NAD(+) contacts are provided by residues Ile176, Asp196, Arg201, 271-273, and 295-296; these read LGI and IY.

The protein belongs to the zinc-containing alcohol dehydrogenase family. Homotetramer. The cofactor is Zn(2+).

It is found in the cytoplasm. It carries out the reaction L-threonine + NAD(+) = (2S)-2-amino-3-oxobutanoate + NADH + H(+). The protein operates within amino-acid degradation; L-threonine degradation via oxydo-reductase pathway; glycine from L-threonine: step 1/2. Its function is as follows. Catalyzes the NAD(+)-dependent oxidation of L-threonine to 2-amino-3-ketobutyrate. This chain is L-threonine 3-dehydrogenase, found in Francisella tularensis subsp. tularensis (strain SCHU S4 / Schu 4).